A 301-amino-acid polypeptide reads, in one-letter code: uncharacterized protein (301 aa).

Disordered stretches follow at residues 167-186 and 225-244; these read DVHL…PKER and ASES…EGAS. Over residues 170–181 the composition is skewed to polar residues; it reads LNSTTPPHTAQV. The segment covering 226 to 237 has biased composition (low complexity); that stretch reads SESSLETSSVSS.

This is an uncharacterized protein from Mus musculus (Mouse).